The following is a 640-amino-acid chain: Threonine--tRNA ligase (640 aa).

The TGS domain maps to 1-61 (MPIITLPDGS…ERDATLQIIT (61 aa)). Residues 242 to 533 (DHRRIGKQLD…LIEHYAGAFP (292 aa)) are catalytic. The Zn(2+) site is built by Cys-333, His-384, and His-510.

This sequence belongs to the class-II aminoacyl-tRNA synthetase family. In terms of assembly, homodimer. Zn(2+) is required as a cofactor.

The protein resides in the cytoplasm. It carries out the reaction tRNA(Thr) + L-threonine + ATP = L-threonyl-tRNA(Thr) + AMP + diphosphate + H(+). In terms of biological role, catalyzes the attachment of threonine to tRNA(Thr) in a two-step reaction: L-threonine is first activated by ATP to form Thr-AMP and then transferred to the acceptor end of tRNA(Thr). Also edits incorrectly charged L-seryl-tRNA(Thr). The protein is Threonine--tRNA ligase of Pseudomonas paraeruginosa (strain DSM 24068 / PA7) (Pseudomonas aeruginosa (strain PA7)).